Reading from the N-terminus, the 566-residue chain is Cyclin-dependent kinase-like 2 (566 aa).

The Protein kinase domain occupies 4 to 287 (YENLGLVGEG…CAELLHHDFF (284 aa)). Residues 10–18 (VGEGSYGMV) and K33 contribute to the ATP site. Positions 45–51 (KKIAMRE) match the [NKR]KIAxRE motif. The Proton acceptor role is filled by D126. Disordered stretches follow at residues 307 to 334 (DARN…GEER) and 545 to 566 (QVSG…EHQH). A compositionally biased stretch (basic and acidic residues) spans 320 to 334 (RKKEKEKDDSLGEER).

This sequence belongs to the protein kinase superfamily. CMGC Ser/Thr protein kinase family. CDC2/CDKX subfamily.

It is found in the cytoplasm. It localises to the nucleus. The catalysed reaction is L-seryl-[protein] + ATP = O-phospho-L-seryl-[protein] + ADP + H(+). The enzyme catalyses L-threonyl-[protein] + ATP = O-phospho-L-threonyl-[protein] + ADP + H(+). The chain is Cyclin-dependent kinase-like 2 from Oryctolagus cuniculus (Rabbit).